A 121-amino-acid chain; its full sequence is Ribosome-binding factor A (121 aa).

This sequence belongs to the RbfA family. In terms of assembly, monomer. Binds 30S ribosomal subunits, but not 50S ribosomal subunits or 70S ribosomes.

It localises to the cytoplasm. In terms of biological role, one of several proteins that assist in the late maturation steps of the functional core of the 30S ribosomal subunit. Associates with free 30S ribosomal subunits (but not with 30S subunits that are part of 70S ribosomes or polysomes). Required for efficient processing of 16S rRNA. May interact with the 5'-terminal helix region of 16S rRNA. This is Ribosome-binding factor A from Clostridium tetani (strain Massachusetts / E88).